A 69-amino-acid polypeptide reads, in one-letter code: Large ribosomal subunit protein uL29 (69 aa).

The protein belongs to the universal ribosomal protein uL29 family.

This chain is Large ribosomal subunit protein uL29, found in Methylobacillus flagellatus (strain ATCC 51484 / DSM 6875 / VKM B-1610 / KT).